The chain runs to 415 residues: 3-isopropylmalate dehydratase large subunit (415 aa).

Cys-295, Cys-353, and Cys-356 together coordinate [4Fe-4S] cluster.

The protein belongs to the aconitase/IPM isomerase family. LeuC type 2 subfamily. In terms of assembly, heterodimer of LeuC and LeuD. The cofactor is [4Fe-4S] cluster.

The enzyme catalyses (2R,3S)-3-isopropylmalate = (2S)-2-isopropylmalate. It functions in the pathway amino-acid biosynthesis; L-leucine biosynthesis; L-leucine from 3-methyl-2-oxobutanoate: step 2/4. Its function is as follows. Catalyzes the isomerization between 2-isopropylmalate and 3-isopropylmalate, via the formation of 2-isopropylmaleate. The polypeptide is 3-isopropylmalate dehydratase large subunit (Pyrobaculum aerophilum (strain ATCC 51768 / DSM 7523 / JCM 9630 / CIP 104966 / NBRC 100827 / IM2)).